A 634-amino-acid polypeptide reads, in one-letter code: Chaperone protein HtpG (634 aa).

The tract at residues 1 to 344 is a; substrate-binding; the sequence is MSETVSQNKE…SNDLPLNVSR (344 aa). A b region spans residues 345 to 561; it reads EILQDNKVTQ…DYEMGTQMAK (217 aa). The tract at residues 562–634 is c; it reads LLAAAGQAVP…GAINKLLTKV (73 aa).

The protein belongs to the heat shock protein 90 family. As to quaternary structure, homodimer.

It localises to the cytoplasm. Functionally, molecular chaperone. Has ATPase activity. The protein is Chaperone protein HtpG of Vibrio parahaemolyticus serotype O3:K6 (strain RIMD 2210633).